The sequence spans 534 residues: Ankyrin repeat and LEM domain-containing protein 1 (534 aa).

ANK repeat units follow at residues 4–35 (TACL…DPNL), 39–71 (DGAA…DPNA), 75–104 (EGLT…DPTL), and 108–137 (DGLR…PTQP). One can recognise an LEM domain in the interval 279–323 (HSSVPPMSDLQLLQALRALGYSPGPVTPFTRGHYLRRLQEAQASR). Residues 370–485 (KSSFTYLLLD…ALGLQTLTNQ (116 aa)) form the GIY-YIG domain. A Nuclear localization signal motif is present at residues 498–505 (PPSRRRRL).

As to quaternary structure, interacts (via LEM domain) with BANF1; the interaction may favor BANF1 dimerization. In terms of tissue distribution, predominantly expressed in bone marrow, spleen, thymus, colon and ovary. Expressed also to a lesser extent in lymph nodes, liver and testis.

The protein resides in the cytoplasm. Its subcellular location is the nucleus. Functionally, endonuclease that probably plays a role in the DNA damage response and DNA repair. In Mus musculus (Mouse), this protein is Ankyrin repeat and LEM domain-containing protein 1.